Here is a 206-residue protein sequence, read N- to C-terminus: Small ribosomal subunit protein uS4 (206 aa).

The S4 RNA-binding domain occupies 96-156 (GRLDNVVYRM…EKAKKQSRVK (61 aa)).

It belongs to the universal ribosomal protein uS4 family. Part of the 30S ribosomal subunit. Contacts protein S5. The interaction surface between S4 and S5 is involved in control of translational fidelity.

One of the primary rRNA binding proteins, it binds directly to 16S rRNA where it nucleates assembly of the body of the 30S subunit. Functionally, with S5 and S12 plays an important role in translational accuracy. This is Small ribosomal subunit protein uS4 from Salmonella typhi.